The following is a 307-amino-acid chain: uncharacterized protein (307 aa).

The disordered stretch occupies residues 254–278 (HSRHHRRHHRRHHHHHHQNSSHSDE). The segment covering 255 to 272 (SRHHRRHHRRHHHHHHQN) has biased composition (basic residues).

It to yeast YOR062c.

This is an uncharacterized protein from Saccharomyces cerevisiae (strain ATCC 204508 / S288c) (Baker's yeast).